The following is a 103-amino-acid chain: Co-chaperonin GroES (103 aa).

Belongs to the GroES chaperonin family. As to quaternary structure, heptamer of 7 subunits arranged in a ring. Interacts with the chaperonin GroEL.

The protein resides in the cytoplasm. Functionally, together with the chaperonin GroEL, plays an essential role in assisting protein folding. The GroEL-GroES system forms a nano-cage that allows encapsulation of the non-native substrate proteins and provides a physical environment optimized to promote and accelerate protein folding. GroES binds to the apical surface of the GroEL ring, thereby capping the opening of the GroEL channel. This Prochlorococcus marinus subsp. pastoris (strain CCMP1986 / NIES-2087 / MED4) protein is Co-chaperonin GroES.